We begin with the raw amino-acid sequence, 207 residues long: Small ribosomal subunit protein uS4 (207 aa).

The interval 31–55 (KCKLDSKPGQHGRTSGARTSDYGTQ) is disordered. A compositionally biased stretch (polar residues) spans 42–53 (GRTSGARTSDYG). The region spanning 97–157 (SRLDNVVYRM…EQKKKQARIL (61 aa)) is the S4 RNA-binding domain.

This sequence belongs to the universal ribosomal protein uS4 family. In terms of assembly, part of the 30S ribosomal subunit. Contacts protein S5. The interaction surface between S4 and S5 is involved in control of translational fidelity.

One of the primary rRNA binding proteins, it binds directly to 16S rRNA where it nucleates assembly of the body of the 30S subunit. In terms of biological role, with S5 and S12 plays an important role in translational accuracy. The polypeptide is Small ribosomal subunit protein uS4 (Paraburkholderia xenovorans (strain LB400)).